The sequence spans 179 residues: Large ribosomal subunit protein uL6 (179 aa).

The protein belongs to the universal ribosomal protein uL6 family. In terms of assembly, part of the 50S ribosomal subunit.

Its function is as follows. This protein binds to the 23S rRNA, and is important in its secondary structure. It is located near the subunit interface in the base of the L7/L12 stalk, and near the tRNA binding site of the peptidyltransferase center. In Mycoplasmopsis pulmonis (strain UAB CTIP) (Mycoplasma pulmonis), this protein is Large ribosomal subunit protein uL6.